A 287-amino-acid polypeptide reads, in one-letter code: Ribosomal RNA small subunit methyltransferase I (287 aa).

Belongs to the methyltransferase superfamily. RsmI family.

It is found in the cytoplasm. It carries out the reaction cytidine(1402) in 16S rRNA + S-adenosyl-L-methionine = 2'-O-methylcytidine(1402) in 16S rRNA + S-adenosyl-L-homocysteine + H(+). Its function is as follows. Catalyzes the 2'-O-methylation of the ribose of cytidine 1402 (C1402) in 16S rRNA. The sequence is that of Ribosomal RNA small subunit methyltransferase I from Streptococcus pyogenes serotype M6 (strain ATCC BAA-946 / MGAS10394).